Here is a 259-residue protein sequence, read N- to C-terminus: MRKKQGRLTIVKQTEVARDSYELVLEGELVKHMSQPGQFLHVRVDESEDLLLRRPISIANIDPEKEQVTMIYRAGGAGTKRLAAQRVGTEVDVLGPLGQGFPLEEAKRGEEVLLVGGGIGVPPLYYLGRRLVENGARVTSVLGFASQADVFYEQPFKQLGNVHIATADGSYGAPGFVTDVISQQSLDFDVLYSCGPTPMLKALTARYRERRAFISLEERMGCGVGACFACVCHVENGQAHEYRKICTDGPVFPVGEVVL.

Positions 3–103 (KKQGRLTIVK…LGPLGQGFPL (101 aa)) constitute an FAD-binding FR-type domain. FAD is bound by residues 54–57 (RPIS), 71–73 (IYR), and 78–79 (GT). 4 residues coordinate [2Fe-2S] cluster: cysteine 222, cysteine 227, cysteine 230, and cysteine 246.

The protein belongs to the PyrK family. In terms of assembly, heterotetramer of 2 PyrK and 2 PyrD type B subunits. [2Fe-2S] cluster serves as cofactor. FAD is required as a cofactor.

It functions in the pathway pyrimidine metabolism; UMP biosynthesis via de novo pathway; orotate from (S)-dihydroorotate (NAD(+) route): step 1/1. Functionally, responsible for channeling the electrons from the oxidation of dihydroorotate from the FMN redox center in the PyrD type B subunit to the ultimate electron acceptor NAD(+). In Shouchella clausii (strain KSM-K16) (Alkalihalobacillus clausii), this protein is Dihydroorotate dehydrogenase B (NAD(+)), electron transfer subunit.